The primary structure comprises 400 residues: 3-phenylpropionate/cinnamic acid dioxygenase ferredoxin--NAD(+) reductase component (400 aa).

5-36 (TIIIVGGGQAAAMAAASLRQQGFTGELHLFSD) is an FAD binding site. 146-174 (SVVIVGAGTIGLELAASATQRGCKATVIE) is a binding site for NAD(+).

The protein belongs to the bacterial ring-hydroxylating dioxygenase ferredoxin reductase family. As to quaternary structure, this dioxygenase system consists of four proteins: the two subunits of the hydroxylase component (HcaE and HcaF), a ferredoxin (HcaC) and a ferredoxin reductase (HcaD). The cofactor is FAD.

The enzyme catalyses 2 reduced [2Fe-2S]-[ferredoxin] + NAD(+) + H(+) = 2 oxidized [2Fe-2S]-[ferredoxin] + NADH. Its pathway is aromatic compound metabolism; 3-phenylpropanoate degradation. Part of the multicomponent 3-phenylpropionate dioxygenase, that converts 3-phenylpropionic acid (PP) and cinnamic acid (CI) into 3-phenylpropionate-dihydrodiol (PP-dihydrodiol) and cinnamic acid-dihydrodiol (CI-dihydrodiol), respectively. The polypeptide is 3-phenylpropionate/cinnamic acid dioxygenase ferredoxin--NAD(+) reductase component (Escherichia coli O7:K1 (strain IAI39 / ExPEC)).